Here is a 628-residue protein sequence, read N- to C-terminus: DNA-directed RNA polymerase subunit beta' (628 aa).

Zn(2+) contacts are provided by cysteine 70, cysteine 72, cysteine 85, and cysteine 88. 3 residues coordinate Mg(2+): aspartate 472, aspartate 474, and aspartate 476.

Belongs to the RNA polymerase beta' chain family. RpoC1 subfamily. As to quaternary structure, in plastids the minimal PEP RNA polymerase catalytic core is composed of four subunits: alpha, beta, beta', and beta''. When a (nuclear-encoded) sigma factor is associated with the core the holoenzyme is formed, which can initiate transcription. The cofactor is Mg(2+). Requires Zn(2+) as cofactor.

It localises to the plastid. Its subcellular location is the chloroplast. It catalyses the reaction RNA(n) + a ribonucleoside 5'-triphosphate = RNA(n+1) + diphosphate. Its function is as follows. DNA-dependent RNA polymerase catalyzes the transcription of DNA into RNA using the four ribonucleoside triphosphates as substrates. The polypeptide is DNA-directed RNA polymerase subunit beta' (Gracilaria tenuistipitata var. liui (Red alga)).